The chain runs to 180 residues: Large ribosomal subunit protein uL5 (180 aa).

This sequence belongs to the universal ribosomal protein uL5 family. Part of the 50S ribosomal subunit; part of the 5S rRNA/L5/L18/L25 subcomplex. Contacts the 5S rRNA and the P site tRNA. Forms a bridge to the 30S subunit in the 70S ribosome.

Functionally, this is one of the proteins that bind and probably mediate the attachment of the 5S RNA into the large ribosomal subunit, where it forms part of the central protuberance. In the 70S ribosome it contacts protein S13 of the 30S subunit (bridge B1b), connecting the 2 subunits; this bridge is implicated in subunit movement. Contacts the P site tRNA; the 5S rRNA and some of its associated proteins might help stabilize positioning of ribosome-bound tRNAs. The sequence is that of Large ribosomal subunit protein uL5 from Polynucleobacter necessarius subsp. necessarius (strain STIR1).